A 282-amino-acid chain; its full sequence is MTNFSSSPPIAFGDLQGCHAAYRQLFAQLSPAADTPLWFAGDLVNRGPASLATLREIVGLGERAVAVLGNHDLHLLAVAAGIRTLKPGDTIGEILDAPDADDLIEWVRHRPFAHFERGMLMVHAGLLPQWDAALALELADELQRALRAPNWRDTLRGLYGNDPNCWSPDLKKADRLRVAFNAFTRIRFCTPEGAMEFRANGGPASAPAGYLPWFDAPSRKTADVTVVFGHWAALGLMLRENLVALDSGCVWGNRLSAVRLADDPAAREVAQVACERCGAAEE.

The protein belongs to the Ap4A hydrolase family.

It catalyses the reaction P(1),P(4)-bis(5'-adenosyl) tetraphosphate + H2O = 2 ADP + 2 H(+). Functionally, hydrolyzes diadenosine 5',5'''-P1,P4-tetraphosphate to yield ADP. The chain is Bis(5'-nucleosyl)-tetraphosphatase, symmetrical from Burkholderia thailandensis (strain ATCC 700388 / DSM 13276 / CCUG 48851 / CIP 106301 / E264).